A 283-amino-acid chain; its full sequence is 2-dehydro-3-deoxyphosphooctonate aldolase (283 aa).

Belongs to the KdsA family.

The protein resides in the cytoplasm. The catalysed reaction is D-arabinose 5-phosphate + phosphoenolpyruvate + H2O = 3-deoxy-alpha-D-manno-2-octulosonate-8-phosphate + phosphate. The protein operates within carbohydrate biosynthesis; 3-deoxy-D-manno-octulosonate biosynthesis; 3-deoxy-D-manno-octulosonate from D-ribulose 5-phosphate: step 2/3. Its pathway is bacterial outer membrane biogenesis; lipopolysaccharide biosynthesis. The protein is 2-dehydro-3-deoxyphosphooctonate aldolase of Vibrio parahaemolyticus serotype O3:K6 (strain RIMD 2210633).